A 435-amino-acid polypeptide reads, in one-letter code: Glutamine synthetase (435 aa).

Residues Lys12–Ala94 enclose the GS beta-grasp domain. The GS catalytic domain maps to Pro100–Val435. Glu123, Glu125, Glu180, and Glu187 together coordinate Mg(2+). Gly232 is a binding site for L-glutamate. His236 lines the Mg(2+) pocket. Residue Ser240 participates in ATP binding. 2 residues coordinate L-glutamate: Arg291 and Arg315. ATP contacts are provided by Arg315 and Arg320. A Mg(2+)-binding site is contributed by Glu328. L-glutamate is bound at residue Arg330.

The protein belongs to the glutamine synthetase family. As to quaternary structure, homooctamer. It depends on Mg(2+) as a cofactor.

It carries out the reaction L-glutamate + NH4(+) + ATP = L-glutamine + ADP + phosphate + H(+). Inhibited by methionine sulfoximine, ADP and pyrophosphate, but not by various nitrogen-containing metabolites that inhibit other GS enzymes. In terms of biological role, catalyzes the ATP-dependent biosynthesis of glutamine from glutamate and ammonia. This is Glutamine synthetase from Rhizobium meliloti (strain 1021) (Ensifer meliloti).